The chain runs to 335 residues: MLTKLFLKKKFEEYYSKNEVELPRKFKNREFAFVPLELLPDFVMHRHISFRSETDFRAYILSNVPAHIYFSSAYYERPAEDKMENKGWLGADLIFDIDADHLPVKAQSFEKALEMAKREIKKLTAVLRADFGIRDMKIYFSGGRGYHVHVHDEEFLSLGSAERREIVDYLRLNSPKIVVEDRFANSNAAKRVLNYLRKKLEEDERLTSKLKIKPADLKKEKLTKKVIRAVEKFDYSALSIYIDAPVTADVKRLIRLPGSLHGKTGLRVTEVEDIESFNPLKDALAFGDEAVVVKVARKLNLSIGDFSGKIYPGRVKLPEYAAVFLICRGDASYDS.

Active-site residues include Asp-96, Asp-98, and Asp-243.

This sequence belongs to the eukaryotic-type primase small subunit family. Heterodimer of a small subunit (PriS) and a large subunit (PriL). The cofactor is Mg(2+). Requires Mn(2+) as cofactor.

Its function is as follows. Catalytic subunit of DNA primase, an RNA polymerase that catalyzes the synthesis of short RNA molecules used as primers for DNA polymerase during DNA replication. The small subunit contains the primase catalytic core and has DNA synthesis activity on its own. Binding to the large subunit stabilizes and modulates the activity, increasing the rate of DNA synthesis while decreasing the length of the DNA fragments, and conferring RNA synthesis capability. The DNA polymerase activity may enable DNA primase to also catalyze primer extension after primer synthesis. May also play a role in DNA repair. This Archaeoglobus fulgidus (strain ATCC 49558 / DSM 4304 / JCM 9628 / NBRC 100126 / VC-16) protein is DNA primase small subunit PriS.